An 856-amino-acid chain; its full sequence is DNA mismatch repair protein MutS (856 aa).

An ATP-binding site is contributed by 605 to 612 (GPNMSGKS).

This sequence belongs to the DNA mismatch repair MutS family.

Its function is as follows. This protein is involved in the repair of mismatches in DNA. It is possible that it carries out the mismatch recognition step. This protein has a weak ATPase activity. In Lysinibacillus sphaericus (strain C3-41), this protein is DNA mismatch repair protein MutS.